We begin with the raw amino-acid sequence, 419 residues long: Creatine kinase S-type, mitochondrial (419 aa).

A mitochondrion-targeting transit peptide spans 1–39; the sequence is MASTFSKLLTGRNASLLFATLGTSALTTGYLVNRQKVCA. The segment at 40–64 is cardiolipin-binding; sequence EARDQHKLFPPSADYPDLRKHNNCM. One can recognise a Phosphagen kinase N-terminal domain in the interval 46–132; the sequence is KLFPPSADYP…FDPVIKLRHN (87 aa). Residues 159–401 enclose the Phosphagen kinase C-terminal domain; it reads YVLSSRVRTG…NYLVDCEKKL (243 aa). ATP-binding positions include 162–166 and His225; that span reads SSRVR. Tyr255 carries the post-translational modification Phosphotyrosine. ATP is bound by residues Arg270, Arg326, 354–359, and Asp369; that span reads RGTGGV. Residue Thr356 is modified to Phosphothreonine.

This sequence belongs to the ATP:guanido phosphotransferase family. As to quaternary structure, exists as an octamer composed of four CKMT2 homodimers.

It is found in the mitochondrion inner membrane. The catalysed reaction is creatine + ATP = N-phosphocreatine + ADP + H(+). In terms of biological role, reversibly catalyzes the transfer of phosphate between ATP and various phosphogens (e.g. creatine phosphate). Creatine kinase isoenzymes play a central role in energy transduction in tissues with large, fluctuating energy demands, such as skeletal muscle, heart, brain and spermatozoa. This is Creatine kinase S-type, mitochondrial (CKMT2) from Oryctolagus cuniculus (Rabbit).